A 232-amino-acid chain; its full sequence is 2,3,4,5-tetrahydropyridine-2,6-dicarboxylate N-acetyltransferase (232 aa).

It belongs to the transferase hexapeptide repeat family. DapH subfamily.

The enzyme catalyses (S)-2,3,4,5-tetrahydrodipicolinate + acetyl-CoA + H2O = L-2-acetamido-6-oxoheptanedioate + CoA. It functions in the pathway amino-acid biosynthesis; L-lysine biosynthesis via DAP pathway; LL-2,6-diaminopimelate from (S)-tetrahydrodipicolinate (acetylase route): step 1/3. Functionally, catalyzes the transfer of an acetyl group from acetyl-CoA to tetrahydrodipicolinate. The protein is 2,3,4,5-tetrahydropyridine-2,6-dicarboxylate N-acetyltransferase of Streptococcus gordonii (strain Challis / ATCC 35105 / BCRC 15272 / CH1 / DL1 / V288).